The following is a 112-amino-acid chain: Ribonuclease VapC8 (112 aa).

The PINc domain maps to 10–109 (LLDTSVFIAR…TDALIAATAE (100 aa)). The Mg(2+) site is built by Asp-12 and Asp-101.

It belongs to the PINc/VapC protein family. Requires Mg(2+) as cofactor.

Functionally, toxic component of a type II toxin-antitoxin (TA) system. An RNase. The cognate antitoxin is VapB8. The sequence is that of Ribonuclease VapC8 (vapC8) from Mycobacterium tuberculosis (strain CDC 1551 / Oshkosh).